We begin with the raw amino-acid sequence, 215 residues long: Chaperone protein TorD (215 aa).

It belongs to the TorD/DmsD family. TorD subfamily.

Its subcellular location is the cytoplasm. In terms of biological role, involved in the biogenesis of TorA. Acts on TorA before the insertion of the molybdenum cofactor and, as a result, probably favors a conformation of the apoenzyme that is competent for acquiring the cofactor. In Vibrio vulnificus (strain YJ016), this protein is Chaperone protein TorD.